The chain runs to 390 residues: Telobox protein 1 (390 aa).

Residues 30–57 form a disordered region; that stretch reads ENPSKREVAQDVPGFERKPTKVRKPRVK. Residues 32 to 48 are compositionally biased toward basic and acidic residues; that stretch reads PSKREVAQDVPGFERKP. 2 consecutive HTH myb-type domains span residues 50–109 and 135–193; these read KVRK…PEDY and STRK…PERY. A DNA-binding region (H-T-H motif) is located at residues 78–105; sequence WKKILLDERFHFTNRSPNDLKDRFRTIL. The segment at 115 to 143 is disordered; it reads NAKTHMGRPQKIPHTVGLSKSTRKERKQF. The H-T-H motif DNA-binding region spans 162 to 189; that stretch reads WTRISKDANLGLQNRRSTDLRDRFRNAF. Composition is skewed to polar residues over residues 244–257 and 322–340; these read SNPNASPQQTTEQP and ISPSTSQNSVQPFPFSIQQ. 2 disordered regions span residues 244-278 and 316-390; these read SNPNASPQQTTEQPASDELLDWPHHNLPSQFFTSQ and QPPS…DNRG. A compositionally biased stretch (low complexity) spans 347–360; that stretch reads PPLSSNTLNSSTLP.

The protein resides in the nucleus. Its function is as follows. General transcription factor with prominent roles in controlling histone levels and stability. Binds and regulates the activities of many promoters, including those controlling the expression of all four types of canonical histones. Is also involved in the centromeric loading of cnp1 and maintenance of centromere identity. Moreover, regulates the expression of cdc2, a protease capable of histone clipping. In Schizosaccharomyces pombe (strain 972 / ATCC 24843) (Fission yeast), this protein is Telobox protein 1.